Reading from the N-terminus, the 515-residue chain is 2,3-bisphosphoglycerate-independent phosphoglycerate mutase (515 aa).

Residues aspartate 14 and serine 64 each coordinate Mn(2+). Serine 64 serves as the catalytic Phosphoserine intermediate. Substrate contacts are provided by residues histidine 125, 155–156, arginine 187, arginine 193, 263–266, and lysine 337; these read RD and RADR. 5 residues coordinate Mn(2+): aspartate 404, histidine 408, aspartate 445, histidine 446, and histidine 464.

Belongs to the BPG-independent phosphoglycerate mutase family. In terms of assembly, monomer. It depends on Mn(2+) as a cofactor.

It carries out the reaction (2R)-2-phosphoglycerate = (2R)-3-phosphoglycerate. It functions in the pathway carbohydrate degradation; glycolysis; pyruvate from D-glyceraldehyde 3-phosphate: step 3/5. Functionally, catalyzes the interconversion of 2-phosphoglycerate and 3-phosphoglycerate. The chain is 2,3-bisphosphoglycerate-independent phosphoglycerate mutase from Pseudomonas paraeruginosa (strain DSM 24068 / PA7) (Pseudomonas aeruginosa (strain PA7)).